A 524-amino-acid polypeptide reads, in one-letter code: Nuclear distribution protein PAC1 (524 aa).

Residues 65–90 (STVLRLQRKIIDLENEVGTLRSIVDG) are a coiled coil. 8 WD repeats span residues 121-160 (QQNQ…TSIP), 166-217 (AHTR…HIRT), 220-262 (GHDH…KSFT), 277-317 (NSQL…GLAL), 353-394 (IPQE…LIPH), 415-454 (GHQS…VTGS), 463-492 (GHDG…DATE), and 493-524 (EESH…KLWS).

This sequence belongs to the WD repeat LIS1/nudF family. Self-associates. Interacts with NDL1 and dynein.

The protein resides in the cytoplasm. It localises to the cytoskeleton. The protein localises to the spindle pole. Positively regulates the activity of the minus-end directed microtubule motor protein dynein. Plays a central role in positioning the mitotic spindle at the bud neck during cell division. Targets cytoplasmic dynein to microtubule plus ends, thereby promoting dynein-mediated microtubule sliding along the bud cortex and consequently the movement of the mitotic spindle to the bud neck. The chain is Nuclear distribution protein PAC1 from Scheffersomyces stipitis (strain ATCC 58785 / CBS 6054 / NBRC 10063 / NRRL Y-11545) (Yeast).